The primary structure comprises 80 residues: MLILSRKKNESIHIGDNIIITVVDIGGDNIKIGIDAPKNVQIFRSELLKAVEQENKNAVSSKSVIQDLAQLIKGDEKKQT.

This sequence belongs to the CsrA/RsmA family. As to quaternary structure, homodimer; the beta-strands of each monomer intercalate to form a hydrophobic core, while the alpha-helices form wings that extend away from the core.

It is found in the cytoplasm. Its function is as follows. A translational regulator that binds mRNA to regulate translation initiation and/or mRNA stability. Usually binds in the 5'-UTR at or near the Shine-Dalgarno sequence preventing ribosome-binding, thus repressing translation. Its main target seems to be the major flagellin gene, while its function is anatagonized by FliW. The chain is Translational regulator CsrA from Desulforamulus reducens (strain ATCC BAA-1160 / DSM 100696 / MI-1) (Desulfotomaculum reducens).